Here is a 644-residue protein sequence, read N- to C-terminus: ATP-dependent zinc metalloprotease FtsH (644 aa).

Over 1-4 (MAKN) the chain is Cytoplasmic. Residues 5-25 (LILWLVIAVVLMSVFQSFGPS) traverse the membrane as a helical segment. At 26 to 98 (ESNGRKVDYS…VGEPPEEPSL (73 aa)) the chain is on the periplasmic side. Residues 99–119 (LASIFISWFPMLLLIGVWIFF) traverse the membrane as a helical segment. The Cytoplasmic segment spans residues 120-644 (MRQMQGGGGK…NTMSEQLGDK (525 aa)). Residue 192-199 (GPPGTGKT) participates in ATP binding. His414 is a binding site for Zn(2+). Residue Glu415 is part of the active site. Zn(2+)-binding residues include His418 and Asp492. The interval 599–644 (RPPAGWEDPNGTNNSDSNGTPQAPRPVDEPRTPNPGNTMSEQLGDK) is disordered. Composition is skewed to polar residues over residues 608–619 (NGTNNSDSNGTP) and 632–644 (NPGNTMSEQLGDK).

In the central section; belongs to the AAA ATPase family. It in the C-terminal section; belongs to the peptidase M41 family. Homohexamer. Zn(2+) serves as cofactor.

It localises to the cell inner membrane. Functionally, acts as a processive, ATP-dependent zinc metallopeptidase for both cytoplasmic and membrane proteins. Plays a role in the quality control of integral membrane proteins. The sequence is that of ATP-dependent zinc metalloprotease FtsH from Salmonella typhi.